We begin with the raw amino-acid sequence, 688 residues long: Elongation factor G (688 aa).

The tr-type G domain occupies 8 to 282 (KNFRNFGIMA…AVVDFLPSPV (275 aa)). GTP-binding positions include 17-24 (AHIDAGKT), 81-85 (DTPGH), and 135-138 (NKMD).

Belongs to the TRAFAC class translation factor GTPase superfamily. Classic translation factor GTPase family. EF-G/EF-2 subfamily.

It is found in the cytoplasm. Catalyzes the GTP-dependent ribosomal translocation step during translation elongation. During this step, the ribosome changes from the pre-translocational (PRE) to the post-translocational (POST) state as the newly formed A-site-bound peptidyl-tRNA and P-site-bound deacylated tRNA move to the P and E sites, respectively. Catalyzes the coordinated movement of the two tRNA molecules, the mRNA and conformational changes in the ribosome. The sequence is that of Elongation factor G (fusA) from Mycoplasma genitalium (strain ATCC 33530 / DSM 19775 / NCTC 10195 / G37) (Mycoplasmoides genitalium).